The chain runs to 688 residues: DNA ligase (688 aa).

Residues 42–46 (DAEYD), 91–92 (SL), and glutamate 128 contribute to the NAD(+) site. The active-site N6-AMP-lysine intermediate is lysine 130. Arginine 151, glutamate 188, lysine 305, and lysine 329 together coordinate NAD(+). Zn(2+) is bound by residues cysteine 423, cysteine 426, cysteine 441, and cysteine 447. Residues 608–688 (APQGVLAGKT…GMRKLLEGQL (81 aa)) enclose the BRCT domain.

Belongs to the NAD-dependent DNA ligase family. LigA subfamily. It depends on Mg(2+) as a cofactor. Requires Mn(2+) as cofactor.

The catalysed reaction is NAD(+) + (deoxyribonucleotide)n-3'-hydroxyl + 5'-phospho-(deoxyribonucleotide)m = (deoxyribonucleotide)n+m + AMP + beta-nicotinamide D-nucleotide.. DNA ligase that catalyzes the formation of phosphodiester linkages between 5'-phosphoryl and 3'-hydroxyl groups in double-stranded DNA using NAD as a coenzyme and as the energy source for the reaction. It is essential for DNA replication and repair of damaged DNA. This is DNA ligase from Paraburkholderia phytofirmans (strain DSM 17436 / LMG 22146 / PsJN) (Burkholderia phytofirmans).